Consider the following 198-residue polypeptide: Translation initiation factor IF-3 (198 aa).

The tract at residues 168 to 198 is disordered; it reads SLAPKKAGSPKKAETDTAKKENPKKAVETKE. Residues 178-198 are compositionally biased toward basic and acidic residues; it reads KKAETDTAKKENPKKAVETKE.

Belongs to the IF-3 family. Monomer.

The protein localises to the cytoplasm. In terms of biological role, IF-3 binds to the 30S ribosomal subunit and shifts the equilibrium between 70S ribosomes and their 50S and 30S subunits in favor of the free subunits, thus enhancing the availability of 30S subunits on which protein synthesis initiation begins. This Phocaeicola vulgatus (strain ATCC 8482 / DSM 1447 / JCM 5826 / CCUG 4940 / NBRC 14291 / NCTC 11154) (Bacteroides vulgatus) protein is Translation initiation factor IF-3.